We begin with the raw amino-acid sequence, 883 residues long: Lethal(3)malignant brain tumor-like protein 3 (883 aa).

An interaction with RBPJ. Required for transcription repressor activity on Notch target genes region spans residues Met-1–Trp-64. Residues His-146 to Arg-156 show a composition bias toward basic and acidic residues. Positions His-146–Gly-223 are disordered. Acidic residues-rich tracts occupy residues Asp-157–Asp-166 and Asp-185–Met-194. MBT repeat units lie at residues Trp-232–Pro-332, Phe-340–Pro-439, and Phe-448–Pro-543. The segment at Leu-549–Glu-593 adopts a CCHHC-type; degenerate zinc-finger fold. A disordered region spans residues Ile-595–Gln-768. Basic and acidic residues predominate over residues Lys-616–Pro-662. Lys-638 participates in a covalent cross-link: Glycyl lysine isopeptide (Lys-Gly) (interchain with G-Cter in SUMO2). 2 stretches are compositionally biased toward low complexity: residues Thr-663–Gln-742 and Gln-749–Gln-768. The region spanning Trp-811–Ala-875 is the SAM domain.

In terms of assembly, interacts with RNF2. Interacts (via SAM domain) with SAMD1 (via SAM domain); the interaction mediates L3MBTL3 binding to chromatin. Interacts with RBPJ; the interaction is required for L3MBTL3 localization to chromatin and is impaired the Notch-derived peptides containing the intracellular domain (NICD). Interacts (via SAM domain) with KDM1A. Interacts with DCAF5. Interacts with DNMT1. Interacts with E2F1. Interacts with SOX2. Interacts with SFMBT1. In terms of tissue distribution, detected in hematopoietic progenitor cells in fetal liver. Detected in adult bone marrow, heart, brain, spleen, lung, liver, kidney and testis.

It localises to the nucleus. Is a negative regulator of Notch target genes expression, required for RBPJ-mediated transcriptional repression. It recruits KDM1A to Notch-responsive elements and promotes KDM1A-mediated H3K4me demethylation. Involved in the regulation of ubiquitin-dependent degradation of a set of methylated non-histone proteins, including SOX2. It acts as an adapter recruiting the CRL4-DCAF5 E3 ubiquitin ligase complex to methylated target proteins. Also involved in the regulation of ubiquitin-dependent degradation of methylated DNMT1 and E2F1. Required for normal maturation of myeloid progenitor cells. The sequence is that of Lethal(3)malignant brain tumor-like protein 3 from Mus musculus (Mouse).